The sequence spans 196 residues: Imidazoleglycerol-phosphate dehydratase (196 aa).

The protein belongs to the imidazoleglycerol-phosphate dehydratase family.

Its subcellular location is the cytoplasm. The catalysed reaction is D-erythro-1-(imidazol-4-yl)glycerol 3-phosphate = 3-(imidazol-4-yl)-2-oxopropyl phosphate + H2O. It functions in the pathway amino-acid biosynthesis; L-histidine biosynthesis; L-histidine from 5-phospho-alpha-D-ribose 1-diphosphate: step 6/9. This Dehalococcoides mccartyi (strain ATCC BAA-2266 / KCTC 15142 / 195) (Dehalococcoides ethenogenes (strain 195)) protein is Imidazoleglycerol-phosphate dehydratase.